Here is a 114-residue protein sequence, read N- to C-terminus: Small ribosomal subunit protein bS16 (114 aa).

Residues 87-114 (AFREQPVQSAPKKKAQERAAERAKAAEA) are disordered. The span at 100–114 (KAQERAAERAKAAEA) shows a compositional bias: basic and acidic residues.

Belongs to the bacterial ribosomal protein bS16 family.

This chain is Small ribosomal subunit protein bS16, found in Acidiphilium cryptum (strain JF-5).